We begin with the raw amino-acid sequence, 132 residues long: Bleomycin resistance protein (132 aa).

Residues 1–129 form the VOC domain; that stretch reads MLQSIPALPV…DNNLISFFQQ (129 aa).

Belongs to the bleomycin resistance protein family.

Functionally, binding protein with a strong affinity to the bleomycin family of antibiotics. In Geobacillus stearothermophilus (Bacillus stearothermophilus), this protein is Bleomycin resistance protein (bleO).